We begin with the raw amino-acid sequence, 462 residues long: Na(+)/H(+) antiporter NhaA (462 aa).

11 consecutive transmembrane segments (helical) span residues 24-44, 66-86, 102-122, 156-176, 196-216, 235-255, 256-275, 290-310, 312-332, 361-381, and 392-412; these read ISGL…NLPL, LPIG…TVGL, AAAV…ILFL, GWAV…ALFA, LLAI…YWFI, PWIA…EAGI, HPTL…VMHG, PFSA…VHFE, MSPL…LVVG, MIPA…IASL, and ARFG…VLLS.

This sequence belongs to the NhaA Na(+)/H(+) (TC 2.A.33) antiporter family.

The protein localises to the cell membrane. It carries out the reaction Na(+)(in) + 2 H(+)(out) = Na(+)(out) + 2 H(+)(in). Its function is as follows. Na(+)/H(+) antiporter that extrudes sodium in exchange for external protons. In Bifidobacterium breve (strain NCIMB 8807 / UCC2003), this protein is Na(+)/H(+) antiporter NhaA.